The chain runs to 431 residues: Tol-Pal system protein TolB (431 aa).

Positions 1 to 26 (MSLMTKLGFRALVASCLITAGSAANA) are cleaved as a signal peptide. The segment at 406–431 (DGSAPPQILSVQGGSVREPSWGPFMQ) is disordered.

The protein belongs to the TolB family. As to quaternary structure, the Tol-Pal system is composed of five core proteins: the inner membrane proteins TolA, TolQ and TolR, the periplasmic protein TolB and the outer membrane protein Pal. They form a network linking the inner and outer membranes and the peptidoglycan layer.

The protein localises to the periplasm. In terms of biological role, part of the Tol-Pal system, which plays a role in outer membrane invagination during cell division and is important for maintaining outer membrane integrity. In Burkholderia cenocepacia (strain ATCC BAA-245 / DSM 16553 / LMG 16656 / NCTC 13227 / J2315 / CF5610) (Burkholderia cepacia (strain J2315)), this protein is Tol-Pal system protein TolB.